Here is a 489-residue protein sequence, read N- to C-terminus: 3-octaprenyl-4-hydroxybenzoate carboxy-lyase (489 aa).

Mn(2+) is bound at residue asparagine 172. Residues isoleucine 175–arginine 177, arginine 189–leucine 191, and arginine 194–glycine 195 each bind prenylated FMN. Glutamate 238 contributes to the Mn(2+) binding site. Aspartate 287 serves as the catalytic Proton donor.

This sequence belongs to the UbiD family. As to quaternary structure, homohexamer. Requires prenylated FMN as cofactor. Mn(2+) serves as cofactor.

The protein resides in the cell membrane. It carries out the reaction a 4-hydroxy-3-(all-trans-polyprenyl)benzoate + H(+) = a 2-(all-trans-polyprenyl)phenol + CO2. It functions in the pathway cofactor biosynthesis; ubiquinone biosynthesis. Functionally, catalyzes the decarboxylation of 3-octaprenyl-4-hydroxy benzoate to 2-octaprenylphenol, an intermediate step in ubiquinone biosynthesis. The chain is 3-octaprenyl-4-hydroxybenzoate carboxy-lyase from Aeromonas salmonicida (strain A449).